Reading from the N-terminus, the 474-residue chain is Nucleobindin-1 (474 aa).

Positions 1 to 24 (MPPSGPRAALFLLPSLLLLRAVLA) are cleaved as a signal peptide. S83 is modified (phosphoserine). T145 is subject to Phosphothreonine. Residues 147-215 (EARDLELLIQ…QQRRHREHPK (69 aa)) adopt a coiled-coil conformation. Over residues 190–207 (SLGEEQRKEAERKLEEQQ) the composition is skewed to basic and acidic residues. The segment at 190–218 (SLGEEQRKEAERKLEEQQRRHREHPKVNV) is disordered. The segment at 225 to 318 (LKEVWEELDG…VTLEEFLAST (94 aa)) is binds to GNAI2 and GNAI3. EF-hand domains lie at 237 to 272 (PNRF…ELEK) and 289 to 324 (ERLR…KEFG). D250, N252, D254, E261, D302, N304, D306, and E313 together coordinate Ca(2+). The GBA motif lies at 300-330 (NVDTNQDRLVTLEEFLASTQRKEFGDTGEGW). Residues 355 to 422 (AYTEEELRRF…RKQQQQSHNN (68 aa)) adopt a coiled-coil conformation. The interval 382–474 (LSQETEALGR…EPPQLDSQHL (93 aa)) is disordered. A Phosphoserine modification is found at S383. The segment covering 448-460 (DQKDVDASEKKVP) has biased composition (basic and acidic residues). At S471 the chain carries Phosphoserine.

It belongs to the nucleobindin family. In terms of assembly, interacts (via GBA motif) with guanine nucleotide-binding protein G(i) alpha subunits GNAI1, GNAI2 and GNAI3 with higher affinity for GNAI1 and GNAI3 than for GNAI2. Preferentially interacts with inactive rather than active GNAI3. Interaction with GNAI3 is inhibited when NUCB1 binds calcium, probably due to a conformational change which renders the GBA motif inaccessible. As to expression, expressed in bone where it is detected in the soft tissue in the center of the osteon and in the osteocyte lacuna (at protein level).

The protein localises to the golgi apparatus. The protein resides in the cis-Golgi network membrane. Its subcellular location is the cytoplasm. It is found in the secreted. In terms of biological role, major calcium-binding protein of the Golgi which may have a role in calcium homeostasis. Acts as a non-receptor guanine nucleotide exchange factor which binds to and activates alpha subunits of guanine nucleotide-binding proteins (G proteins). This Bos taurus (Bovine) protein is Nucleobindin-1 (NUCB1).